We begin with the raw amino-acid sequence, 257 residues long: Acetylglutamate kinase (257 aa).

Substrate is bound by residues 40-41 (GG), R62, and N155.

This sequence belongs to the acetylglutamate kinase family. ArgB subfamily.

It is found in the cytoplasm. It catalyses the reaction N-acetyl-L-glutamate + ATP = N-acetyl-L-glutamyl 5-phosphate + ADP. Its pathway is amino-acid biosynthesis; L-arginine biosynthesis; N(2)-acetyl-L-ornithine from L-glutamate: step 2/4. In terms of biological role, catalyzes the ATP-dependent phosphorylation of N-acetyl-L-glutamate. This chain is Acetylglutamate kinase, found in Shouchella clausii (strain KSM-K16) (Alkalihalobacillus clausii).